A 374-amino-acid chain; its full sequence is PqqA peptide cyclase (374 aa).

A Radical SAM core domain is found at Val7–Ala222. Cys21, Cys25, and Cys28 together coordinate [4Fe-4S] cluster.

The protein belongs to the radical SAM superfamily. PqqE family. In terms of assembly, interacts with PqqD. The interaction is necessary for activity of PqqE. It depends on [4Fe-4S] cluster as a cofactor.

The catalysed reaction is [PQQ precursor protein] + S-adenosyl-L-methionine = E-Y cross-linked-[PQQ precursor protein] + 5'-deoxyadenosine + L-methionine + H(+). Its pathway is cofactor biosynthesis; pyrroloquinoline quinone biosynthesis. Its function is as follows. Catalyzes the cross-linking of a glutamate residue and a tyrosine residue in the PqqA protein as part of the biosynthesis of pyrroloquinoline quinone (PQQ). This Kluyvera intermedia (Enterobacter intermedius) protein is PqqA peptide cyclase.